The chain runs to 814 residues: Glycosyltransferase GlyD (814 aa).

Positions Met-1 to Glu-264 are GT8 domain. Residues Ala-8–Tyr-13 and Asp-102–Ser-103 each bind UDP. Residues Asp-102, Asp-104, and His-226 each contribute to the Mn(2+) site. His-226–Lys-232 contributes to the UDP binding site. The GT-D domain stretch occupies residues Glu-542–Asn-814.

The protein in the N-terminal section; belongs to the glycosyltransferase 8 family. It in the C-terminal section; belongs to the GT-D family.

Its pathway is protein modification; protein glycosylation. Its function is as follows. Involved in the polymorphic O-glycosylation of the serine-rich repeat protein PsrP. Catalyzes the third step in glycosylation PsrP in this bacteria. Transfers glucose from UDP-glucose to the terminal glucose moiety of already-glycosylated PsrP (using truncated substrates with PsrP SSR1-GlcNAc-Glc); the C-terminal GT-D domain is sufficient for this reaction in vitro. Also transfers galactose from UDP-galactose to the terminal glucose moiety of already-glycosylated PsrP; the C-terminal GT-D domain is also sufficient for this reaction in vitro. Activity is much higher with UDP-glucose, and the enzyme has a very marked preference for PsrP substrate that has already been modified by GlcNAc and glucose. In vitro has hydrolytic activity against UDP-galactose and to a lesser extent against UDP-glucose. Functionally, also catalyzes the fourth step in glycosylation of PsrP in this bacteria. Can transfer the sugar from both UDP-glucose and UDP-galactose to the terminal sugar moiety of PsrP-GlcNAc-Glc-Glc and PsrP-GlcNAc-Glc-Gal; the C-terminal GT-D domain is also sufficient for this reaction in vitro (using truncated substrates with glycosylated PsrP SSR1). The N-terminal GT-D domain can transfer galactose from UDP-galactose to PsrP-GlcNAc-Glc-Gal or PsrP-GlcNAc-Glc-Glc in the fourth step. This is Glycosyltransferase GlyD from Streptococcus pneumoniae serotype 4 (strain ATCC BAA-334 / TIGR4).